The chain runs to 229 residues: Heptaprenylglyceryl phosphate synthase (229 aa).

Lys12 serves as a coordination point for sn-glycerol 1-phosphate. 2 residues coordinate Mg(2+): Asp14 and Ser40. Residues 159-164 (YLEYSG), Gly189, and 209-210 (GN) contribute to the sn-glycerol 1-phosphate site.

Belongs to the GGGP/HepGP synthase family. Group I subfamily. Homodimer. Mg(2+) is required as a cofactor.

The catalysed reaction is sn-glycerol 1-phosphate + all-trans-heptaprenyl diphosphate = 3-heptaprenyl-sn-glycero-1-phosphate + diphosphate. Its pathway is membrane lipid metabolism; glycerophospholipid metabolism. In terms of biological role, prenyltransferase that catalyzes in vivo the transfer of the heptaprenyl moiety of heptaprenyl pyrophosphate (HepPP; 35 carbon atoms) to the C3 hydroxyl of sn-glycerol-1-phosphate (G1P), producing heptaprenylglyceryl phosphate (HepGP). This reaction is an ether-bond-formation step in the biosynthesis of archaea-type G1P-based membrane lipids found in Bacillales. This chain is Heptaprenylglyceryl phosphate synthase, found in Bacillus cereus (strain AH187).